The following is an 81-amino-acid chain: Kappa-theraphotoxin-Gr2c (81 aa).

Positions 1–19 are cleaved as a signal peptide; it reads MKAFFVILGLALLCAYSFA. Positions 20–50 are excised as a propeptide; that stretch reads LEEQDQLSLRNDLLTVMFAENSELTPETEER. 3 disulfides stabilise this stretch: Cys-52-Cys-66, Cys-59-Cys-71, and Cys-65-Cys-75.

It belongs to the neurotoxin 30 (phrixotoxin) family. As to expression, expressed by the venom gland.

Its subcellular location is the secreted. Functionally, inhibits sodium channels Nav1.1/SCN1A (IC(50)=5.7 uM), Nav1.2/SCN2A (IC(50)=12 uM), Nav1.4/SCN4A (IC(50)=4 uM), Nav1.6/SCN8A (IC(50)=6.6 uM), Nav1.7/SCN9A (IC(50)=13.6-1030 nM), potassium channels Kv11.1/KCNH2 (IC(50)=4.7 uM), as well as high-voltage-gated calcium channels Cav1.2/CACNA1C (IC(50)= nM). Also blocks mechanosensitive ion channels (also named stretch-activated channels or SACs) and the hypotonic cell swelling induced calcium increase associated with the activation of such channels. It can thus be useful in treating cardiac ventricular disturbances. Also induces analgesia in mammals. In Grammostola rosea (Chilean rose tarantula), this protein is Kappa-theraphotoxin-Gr2c.